Consider the following 430-residue polypeptide: N-lysine methyltransferase SMYD2-B (430 aa).

Residues 5 to 239 enclose the SET domain; sequence EGLERFDSPG…AGEEVFTSYI (235 aa). 15 to 17 is a binding site for S-adenosyl-L-methionine; the sequence is KGR. Zn(2+) is bound by residues Cys50, Cys53, Cys63, Cys66, Cys72, Cys76, His84, and Cys88. The MYND-type zinc-finger motif lies at 50–88; the sequence is CDFCFTRKEGLSKCGKCKQAFYCNVDCQKGDWPMHKLEC. S-adenosyl-L-methionine-binding positions include His135, 204–205, and 256–258; these read NH and YFF.

This sequence belongs to the class V-like SAM-binding methyltransferase superfamily.

The protein resides in the cytoplasm. It localises to the cytosol. The protein localises to the nucleus. It catalyses the reaction L-lysyl(4)-[histone H3] + 3 S-adenosyl-L-methionine = N(6),N(6),N(6)-trimethyl-L-lysyl(4)-[histone H3] + 3 S-adenosyl-L-homocysteine + 3 H(+). It carries out the reaction L-lysyl-[protein] + S-adenosyl-L-methionine = N(6)-methyl-L-lysyl-[protein] + S-adenosyl-L-homocysteine + H(+). In terms of biological role, protein-lysine N-methyltransferase that methylates both histones and non-histone proteins, including p53/TP53 and RB1. Specifically trimethylates histone H3 'Lys-4' (H3K4me3) in vivo. The activity requires interaction with HSP90alpha. Shows even higher methyltransferase activity on p53/TP53. Monomethylates 'Lys-370' of p53/TP53, leading to decreased DNA-binding activity and subsequent transcriptional regulation activity of p53/TP53. Monomethylates RB1 at 'Lys-860'. The protein is N-lysine methyltransferase SMYD2-B (smyd2-b) of Xenopus laevis (African clawed frog).